Reading from the N-terminus, the 636-residue chain is Fructose-1,6-bisphosphatase class 3 (636 aa).

The protein belongs to the FBPase class 3 family. It depends on Mn(2+) as a cofactor.

The enzyme catalyses beta-D-fructose 1,6-bisphosphate + H2O = beta-D-fructose 6-phosphate + phosphate. The protein operates within carbohydrate biosynthesis; gluconeogenesis. This chain is Fructose-1,6-bisphosphatase class 3, found in Streptococcus gordonii (strain Challis / ATCC 35105 / BCRC 15272 / CH1 / DL1 / V288).